Reading from the N-terminus, the 401-residue chain is Bifunctional enzyme IspD/IspF (401 aa).

The segment at 1 to 234 (MQKPPRTAAI…SRLTAALGDI (234 aa)) is 2-C-methyl-D-erythritol 4-phosphate cytidylyltransferase. The tract at residues 235 to 401 (RTGTGYDVHA…SPWGAEGQAS (167 aa)) is 2-C-methyl-D-erythritol 2,4-cyclodiphosphate synthase. The a divalent metal cation site is built by aspartate 241 and histidine 243. 4-CDP-2-C-methyl-D-erythritol 2-phosphate contacts are provided by residues 241-243 (DVH) and 267-268 (HS). A divalent metal cation is bound at residue histidine 275. Residues 289 to 291 (DIG), 365 to 368 (TTSE), phenylalanine 372, and arginine 375 contribute to the 4-CDP-2-C-methyl-D-erythritol 2-phosphate site.

In the N-terminal section; belongs to the IspD/TarI cytidylyltransferase family. IspD subfamily. This sequence in the C-terminal section; belongs to the IspF family. Requires a divalent metal cation as cofactor.

The enzyme catalyses 2-C-methyl-D-erythritol 4-phosphate + CTP + H(+) = 4-CDP-2-C-methyl-D-erythritol + diphosphate. The catalysed reaction is 4-CDP-2-C-methyl-D-erythritol 2-phosphate = 2-C-methyl-D-erythritol 2,4-cyclic diphosphate + CMP. It functions in the pathway isoprenoid biosynthesis; isopentenyl diphosphate biosynthesis via DXP pathway; isopentenyl diphosphate from 1-deoxy-D-xylulose 5-phosphate: step 2/6. The protein operates within isoprenoid biosynthesis; isopentenyl diphosphate biosynthesis via DXP pathway; isopentenyl diphosphate from 1-deoxy-D-xylulose 5-phosphate: step 4/6. In terms of biological role, bifunctional enzyme that catalyzes the formation of 4-diphosphocytidyl-2-C-methyl-D-erythritol from CTP and 2-C-methyl-D-erythritol 4-phosphate (MEP) (IspD), and catalyzes the conversion of 4-diphosphocytidyl-2-C-methyl-D-erythritol 2-phosphate (CDP-ME2P) to 2-C-methyl-D-erythritol 2,4-cyclodiphosphate (ME-CPP) with a corresponding release of cytidine 5-monophosphate (CMP) (IspF). This chain is Bifunctional enzyme IspD/IspF, found in Rhodopseudomonas palustris (strain HaA2).